We begin with the raw amino-acid sequence, 310 residues long: Tagatose-6-phosphate kinase (310 aa).

It belongs to the carbohydrate kinase PfkB family. LacC subfamily.

It carries out the reaction D-tagatofuranose 6-phosphate + ATP = D-tagatofuranose 1,6-bisphosphate + ADP + H(+). It functions in the pathway carbohydrate metabolism; D-tagatose 6-phosphate degradation; D-glyceraldehyde 3-phosphate and glycerone phosphate from D-tagatose 6-phosphate: step 1/2. The polypeptide is Tagatose-6-phosphate kinase (Lactococcus lactis subsp. lactis (Streptococcus lactis)).